Reading from the N-terminus, the 96-residue chain is ESAT-6-like protein EsxR (96 aa).

It belongs to the WXG100 family. ESAT-6 subfamily.

It localises to the secreted. The polypeptide is ESAT-6-like protein EsxR (Mycobacterium leprae (strain TN)).